An 86-amino-acid chain; its full sequence is uncharacterized protein (86 aa).

This is an uncharacterized protein from Vaccinia virus (strain Copenhagen) (VACV).